Reading from the N-terminus, the 299-residue chain is CMRF35-like molecule 8 (299 aa).

A signal peptide spans 1–17 (MWLPWALLLLWVPGCFA). Residues 18–180 (LSKCRTVAGP…TEEVVNSQLP (163 aa)) are Extracellular-facing. Positions 19–123 (SKCRTVAGPV…HDPVVEVEVS (105 aa)) constitute an Ig-like V-type domain. Residues Cys36 and Cys103 are joined by a disulfide bond. Asn83 and Asn92 each carry an N-linked (GlcNAc...) asparagine glycan. A helical membrane pass occupies residues 181–201 (LLLSLLALLLLLLVGASLLAW). Residues 202–299 (RMFQKWIKAG…DSDYSVIRKT (98 aa)) are Cytoplasmic-facing. Residues 278-299 (RIAAQRPREEEPDSDYSVIRKT) form a disordered region. Phosphotyrosine is present on Tyr293.

It belongs to the CD300 family. In terms of assembly, upon tyrosine-phosphorylation, interacts with PTN6/SHP-1 and PTPN11/SHP-2 and INPP5D. Phosphorylated on tyrosine. Post-translationally, N-glycosylated. In terms of tissue distribution, expressed not only by natural killer (NK) cells but also by T-cell subsets, B-cells, dendritic cells, mast cells, granulocytes and monocytes.

Its subcellular location is the cell membrane. In terms of biological role, inhibitory receptor which may contribute to the down-regulation of cytolytic activity in natural killer (NK) cells, and to the down-regulation of mast cell degranulation. Negatively regulates the Toll-like receptor (TLR) signaling mediated by MYD88 but not TRIF through activation of PTPN6. The protein is CMRF35-like molecule 8 (CD300A) of Homo sapiens (Human).